Here is a 269-residue protein sequence, read N- to C-terminus: Chymotrypsin-like elastase family member 2B (269 aa).

The signal sequence occupies residues 1–16; that stretch reads MIRTLLLSTLVAGALS. The propeptide at 17-28 is activation peptide; the sequence is CGVSTYAPDMSR. One can recognise a Peptidase S1 domain in the interval 29-267; the sequence is MLGGEEARPN…YNDWINSVIA (239 aa). A disulfide bridge links cysteine 58 with cysteine 74. Catalysis depends on charge relay system residues histidine 73 and aspartate 121. 3 disulfide bridges follow: cysteine 155–cysteine 222, cysteine 186–cysteine 202, and cysteine 212–cysteine 243. Residue serine 216 is the Charge relay system of the active site.

This sequence belongs to the peptidase S1 family. Elastase subfamily. As to expression, pancreas.

It is found in the secreted. It carries out the reaction Preferential cleavage: Leu-|-Xaa, Met-|-Xaa and Phe-|-Xaa. Hydrolyzes elastin.. Functionally, acts upon elastin. In Homo sapiens (Human), this protein is Chymotrypsin-like elastase family member 2B (CELA2B).